The following is a 384-amino-acid chain: Putative 8-amino-7-oxononanoate synthase (384 aa).

Arg18 contacts substrate. 105-106 (GY) provides a ligand contact to pyridoxal 5'-phosphate. A substrate-binding site is contributed by His130. Pyridoxal 5'-phosphate contacts are provided by residues Ser176, 201 to 204 (DDAH), and 233 to 236 (TLSK). Lys236 is modified (N6-(pyridoxal phosphate)lysine). Thr349 is a binding site for substrate.

The protein belongs to the class-II pyridoxal-phosphate-dependent aminotransferase family. BioF subfamily. In terms of assembly, homodimer. Requires pyridoxal 5'-phosphate as cofactor.

It carries out the reaction 6-carboxyhexanoyl-[ACP] + L-alanine + H(+) = (8S)-8-amino-7-oxononanoate + holo-[ACP] + CO2. The protein operates within cofactor biosynthesis; biotin biosynthesis. In terms of biological role, catalyzes the decarboxylative condensation of pimeloyl-[acyl-carrier protein] and L-alanine to produce 8-amino-7-oxononanoate (AON), [acyl-carrier protein], and carbon dioxide. The chain is Putative 8-amino-7-oxononanoate synthase (bioF) from Desulfovibrio desulfuricans (strain ATCC 27774 / DSM 6949 / MB).